Here is a 159-residue protein sequence, read N- to C-terminus: MSGEGSPTITIEPGSAHGLRVAIVVSEWNRDITDELASQAQQAGETAGAEVTVIPVVGALEIPVVVKKATQTYDAVVALGCVIQGGTPHFDHVCNAVTYGLTKIAVETETPVGNGVLTCNTHEQAVDRAGGPTAHENKGAEAMIAAIHTAQTLKSMAAD.

Residues W28, 59 to 61, and 81 to 83 contribute to the 5-amino-6-(D-ribitylamino)uracil site; these read ALE and CVI. (2S)-2-hydroxy-3-oxobutyl phosphate is bound at residue 86-87; the sequence is GT. Catalysis depends on H89, which acts as the Proton donor. N114 is a binding site for 5-amino-6-(D-ribitylamino)uracil. R128 contributes to the (2S)-2-hydroxy-3-oxobutyl phosphate binding site.

The protein belongs to the DMRL synthase family.

The enzyme catalyses (2S)-2-hydroxy-3-oxobutyl phosphate + 5-amino-6-(D-ribitylamino)uracil = 6,7-dimethyl-8-(1-D-ribityl)lumazine + phosphate + 2 H2O + H(+). Its pathway is cofactor biosynthesis; riboflavin biosynthesis; riboflavin from 2-hydroxy-3-oxobutyl phosphate and 5-amino-6-(D-ribitylamino)uracil: step 1/2. Its function is as follows. Catalyzes the formation of 6,7-dimethyl-8-ribityllumazine by condensation of 5-amino-6-(D-ribitylamino)uracil with 3,4-dihydroxy-2-butanone 4-phosphate. This is the penultimate step in the biosynthesis of riboflavin. This is 6,7-dimethyl-8-ribityllumazine synthase from Corynebacterium kroppenstedtii (strain DSM 44385 / JCM 11950 / CIP 105744 / CCUG 35717).